The sequence spans 208 residues: N-(5'-phosphoribosyl)anthranilate isomerase (208 aa).

This sequence belongs to the TrpF family.

It catalyses the reaction N-(5-phospho-beta-D-ribosyl)anthranilate = 1-(2-carboxyphenylamino)-1-deoxy-D-ribulose 5-phosphate. It functions in the pathway amino-acid biosynthesis; L-tryptophan biosynthesis; L-tryptophan from chorismate: step 3/5. In Methanococcus maripaludis (strain C5 / ATCC BAA-1333), this protein is N-(5'-phosphoribosyl)anthranilate isomerase.